A 135-amino-acid polypeptide reads, in one-letter code: Small ribosomal subunit protein bS18 (135 aa).

The tract at residues 1 to 65 (MARPDMGGPK…GDEGGGRRGF (65 aa)) is disordered. Over residues 9-41 (PKTGGFGGPRSGGFGGGGGGGGGFGGGGFGGGR) the composition is skewed to gly residues. The span at 42–61 (GGDRGDRGDRDDRGGDEGGG) shows a compositional bias: basic and acidic residues.

It belongs to the bacterial ribosomal protein bS18 family. As to quaternary structure, part of the 30S ribosomal subunit. Forms a tight heterodimer with protein bS6.

Its function is as follows. Binds as a heterodimer with protein bS6 to the central domain of the 16S rRNA, where it helps stabilize the platform of the 30S subunit. This chain is Small ribosomal subunit protein bS18, found in Anaeromyxobacter sp. (strain K).